Reading from the N-terminus, the 201-residue chain is Natural cytotoxicity triggering receptor 3 (201 aa).

Residues 1 to 18 (MAWMLLLILIMVHPGSCA) form the signal peptide. In terms of domain architecture, Ig-like spans 19–126 (LWVSQPPEIR…VGTGNGTRLV (108 aa)). Over 19–135 (LWVSQPPEIR…VVEKEHPQLG (117 aa)) the chain is Extracellular. The cysteines at positions 39 and 108 are disulfide-linked. N-linked (GlcNAc...) asparagine glycosylation is found at asparagine 42 and asparagine 121. Residues 136-156 (AGTVLLLRAGFYAVSFLSVAV) form a helical membrane-spanning segment. Topologically, residues 157–201 (GSTVYYQGKCLTWKGPRRQLPAVVPAPLPPPCGSSAQLLPPVPGG) are cytoplasmic.

It belongs to the natural cytotoxicity receptor (NCR) family. In terms of assembly, homodimer in the unliganted form. Interacts with CD3Z. Interacts with and is activated by binding to NCR3LG1. Interacts with and is activated by binding to BAG6. Interacts with and is inhibited by binding to LGALS3.

The protein resides in the cell membrane. Its function is as follows. Cell membrane receptor of natural killer/NK cells that is activated by binding of extracellular ligands including BAG6 and NCR3LG1. Stimulates NK cells cytotoxicity toward neighboring cells producing these ligands. It controls, for instance, NK cells cytotoxicity against tumor cells. Engagement of NCR3 by BAG6 also promotes myeloid dendritic cells (DC) maturation, both through killing DCs that did not acquire a mature phenotype, and inducing the release by NK cells of TNFA and IFNG that promote DC maturation. In Pan troglodytes (Chimpanzee), this protein is Natural cytotoxicity triggering receptor 3 (NCR3).